Consider the following 618-residue polypeptide: Glucose starvation modulator protein 1 (618 aa).

A DNA-binding region (zn(2)-C6 fungal-type) is located at residues 20-48; it reads CEFCHTKHIQCDVGRPCQNCLKRNIGKFC. The disordered stretch occupies residues 325–352; it reads ANANTHPSHNAKLESECDSSSHSDADLE. Over residues 335–352 the composition is skewed to basic and acidic residues; it reads AKLESECDSSSHSDADLE. A PAS domain is found at 466-538; sequence LLDLENMAKL…QIFNELLAFG (73 aa).

It belongs to the ERT1/acuK family.

It is found in the nucleus. Its function is as follows. Transcription factor which regulates nonfermentable carbon utilization. Binds specifically to 5'-CGGN(8)CGG-3' and 5'-CGGN(9)CGG-3' sequences in the promoter region. This is Glucose starvation modulator protein 1 (GSM1) from Saccharomyces cerevisiae (strain RM11-1a) (Baker's yeast).